Consider the following 181-residue polypeptide: Large ribosomal subunit protein uL16 (181 aa).

Belongs to the universal ribosomal protein uL16 family. In terms of assembly, part of the 50S ribosomal subunit.

The chain is Large ribosomal subunit protein uL16 from Pyrococcus furiosus (strain ATCC 43587 / DSM 3638 / JCM 8422 / Vc1).